The sequence spans 104 residues: Circadian clock oscillator protein KaiB (104 aa).

The protein belongs to the KaiB family. In terms of assembly, the KaiABC complex composition changes during the circadian cycle to control KaiC phosphorylation. Complexes KaiC(6), KaiA(2-4):KaiC(6), KaiB(6):KaiC(6) and KaiC(6):KaiB(6):KaiA(12) are among the most important forms, many form cooperatively. Undergoes a major conformational rearrangment; in the free state forms homotetramers as a dimer of dimers. When bound to the CI domain of KaiC switches to a monomeric thioredoxin-fold (KaiB(fs)). KaiB(fs) binds CikA, leading it to dephosphorylate phospho-RpaA.

Key component of the KaiABC oscillator complex, which constitutes the main circadian regulator in cyanobacteria. Complex composition changes during the circadian cycle to control KaiC phosphorylation. KaiA stimulates KaiC autophosphorylation, while KaiB sequesters KaiA, leading to KaiC autodephosphorylation. Phospho-Ser-431 KaiC accumulation triggers binding of KaiB to form the KaiB(6):KaiC(6) complex, leading to changes in output regulators CikA and SasA. KaiB switches to a thioredoxin-like fold (KaiB(fs)) when bound to KaiC. KaiB(6):KaiC(6) formation exposes a site for KaiA binding that sequesters KaiA from KaiC, making the KaiC(6):KaiB(6):KaiA(12) complex that results in KaiC autodephosphorylation. Its function is as follows. A metamorphic protein which reversibly switches between an inactive tetrameric fold and a rare, thioredoxin-like monomeric fold (KaiB(fs)). KaiB(fs) binds phospho-KaiC, KaiA and CikA. KaiA and CikA compete for binding to KaiB(fs), and KaiB(fs) and SasA compete for binding to KaiC, thus the clock oscillator and output signal pathway are tightly coupled. This Rippkaea orientalis (strain PCC 8801 / RF-1) (Cyanothece sp. (strain PCC 8801)) protein is Circadian clock oscillator protein KaiB.